The primary structure comprises 188 residues: MITSNDFKNGMTIEVDGEVYSIVEFQHVKPGKGAAFVRTKLRHMKSGNVSEKTFRAGEKVKRAHLEEREMQFLYAAGDMYNFMDTESFEQYTLTKDQLEDKTQFIKENMIITVLFHNGEEISIELPVFVELAVSETEPGVKGDTASGGSKPATLETGATVNVPFFINEGDIIKVDTRTSEYIERVKGE.

The protein belongs to the elongation factor P family.

The protein localises to the cytoplasm. Its pathway is protein biosynthesis; polypeptide chain elongation. Functionally, involved in peptide bond synthesis. Stimulates efficient translation and peptide-bond synthesis on native or reconstituted 70S ribosomes in vitro. Probably functions indirectly by altering the affinity of the ribosome for aminoacyl-tRNA, thus increasing their reactivity as acceptors for peptidyl transferase. The sequence is that of Elongation factor P from Natranaerobius thermophilus (strain ATCC BAA-1301 / DSM 18059 / JW/NM-WN-LF).